The following is a 454-amino-acid chain: Bifunctional protein GlmU (454 aa).

The tract at residues 1 to 226 is pyrophosphorylase; the sequence is MSTTVIILAA…AFEVEGVNDR (226 aa). UDP-N-acetyl-alpha-D-glucosamine-binding positions include 8 to 11, Lys-22, Gln-73, 78 to 79, 100 to 102, Gly-137, Glu-151, Asn-166, and Asn-224; these read LAAG, GT, and YGD. Position 102 (Asp-102) interacts with Mg(2+). Asn-224 is a binding site for Mg(2+). Positions 227–247 are linker; it reads LQLAALEREFQKQQAKELMQQ. The tract at residues 248-454 is N-acetyltransferase; that stretch reads GVTFADPARF…NYQRPQKLKK (207 aa). UDP-N-acetyl-alpha-D-glucosamine is bound by residues Arg-330 and Lys-348. His-360 acts as the Proton acceptor in catalysis. 2 residues coordinate UDP-N-acetyl-alpha-D-glucosamine: Tyr-363 and Asn-374. Residues Ala-377, 383 to 384, Ser-402, Ala-420, and Arg-437 each bind acetyl-CoA; that span reads NY.

This sequence in the N-terminal section; belongs to the N-acetylglucosamine-1-phosphate uridyltransferase family. In the C-terminal section; belongs to the transferase hexapeptide repeat family. In terms of assembly, homotrimer. Mg(2+) is required as a cofactor.

The protein resides in the cytoplasm. The catalysed reaction is alpha-D-glucosamine 1-phosphate + acetyl-CoA = N-acetyl-alpha-D-glucosamine 1-phosphate + CoA + H(+). It catalyses the reaction N-acetyl-alpha-D-glucosamine 1-phosphate + UTP + H(+) = UDP-N-acetyl-alpha-D-glucosamine + diphosphate. It functions in the pathway nucleotide-sugar biosynthesis; UDP-N-acetyl-alpha-D-glucosamine biosynthesis; N-acetyl-alpha-D-glucosamine 1-phosphate from alpha-D-glucosamine 6-phosphate (route II): step 2/2. Its pathway is nucleotide-sugar biosynthesis; UDP-N-acetyl-alpha-D-glucosamine biosynthesis; UDP-N-acetyl-alpha-D-glucosamine from N-acetyl-alpha-D-glucosamine 1-phosphate: step 1/1. It participates in bacterial outer membrane biogenesis; LPS lipid A biosynthesis. In terms of biological role, catalyzes the last two sequential reactions in the de novo biosynthetic pathway for UDP-N-acetylglucosamine (UDP-GlcNAc). The C-terminal domain catalyzes the transfer of acetyl group from acetyl coenzyme A to glucosamine-1-phosphate (GlcN-1-P) to produce N-acetylglucosamine-1-phosphate (GlcNAc-1-P), which is converted into UDP-GlcNAc by the transfer of uridine 5-monophosphate (from uridine 5-triphosphate), a reaction catalyzed by the N-terminal domain. The sequence is that of Bifunctional protein GlmU from Acinetobacter baumannii (strain ACICU).